A 187-amino-acid chain; its full sequence is Proenkephalin-A (187 aa).

4 propeptides span residues 52–70, 80–143, 153–163, and 173–187; these read MDEL…EILA, DAEE…KMLQ, VGRPEWWMDYQ, and FADS…ESYS. A disordered region spans residues 81 to 132; the sequence is AEEEEDALASSSDLLKELLGPGETETAAAPRGRDDEDVSKSHGGFMRALKGS. Residues 88–99 show a composition bias toward low complexity; that stretch reads LASSSDLLKELL. The segment covering 111–120 has biased composition (basic and acidic residues); sequence RGRDDEDVSK. Residue S187 is modified to Phosphoserine.

This sequence belongs to the opioid neuropeptide precursor family. Processed and degraded by ACE. Post-translationally, the N-terminal domain contains 6 conserved cysteines thought to be involved in disulfide bonding and/or processing. In terms of processing, proenkephalin-A is cleaved by CTSL to generate Met-enkephalin.

It is found in the cytoplasmic vesicle. It localises to the secretory vesicle. The protein resides in the chromaffin granule lumen. Its subcellular location is the secreted. In terms of biological role, neuropeptide that competes with and mimic the effects of opiate drugs. They play a role in a number of physiologic functions, including pain perception and responses to stress. In Felis catus (Cat), this protein is Proenkephalin-A (PENK).